The sequence spans 20 residues: Cicerin (20 aa).

The disordered stretch occupies residues 1–20 (ARCENFADSYRQPPISSSQT).

In terms of biological role, has antifungal activity against B.cinerea, F.oxysporum and M.arachidicola. Inhibits cell-free translation in rabbit reticulocyte lysate system. This chain is Cicerin, found in Cicer arietinum (Chickpea).